Consider the following 242-residue polypeptide: Arginine transport ATP-binding protein ArtP (242 aa).

One can recognise an ABC transporter domain in the interval 3–241 (IQLNGINCFY…QTEAFKNYLS (239 aa)). 35–42 (GPSGAGKS) lines the ATP pocket.

The protein belongs to the ABC transporter superfamily. In terms of assembly, the complex is composed of two ATP-binding proteins (ArtP), two transmembrane proteins (ArtM and ArtQ) and two solute-binding proteins (ArtJ and ArtI).

It localises to the cell inner membrane. The catalysed reaction is a polar amino acid(out) + ATP + H2O = a polar amino acid(in) + ADP + phosphate + H(+). It carries out the reaction L-arginine(out) + ATP + H2O = L-arginine(in) + ADP + phosphate + H(+). In terms of biological role, part of the ABC transporter complex ArtPIQMJ involved in arginine transport. Probably responsible for energy coupling to the transport system. The protein is Arginine transport ATP-binding protein ArtP (artP) of Escherichia coli O157:H7.